The following is a 112-amino-acid chain: uncharacterized protein (112 aa).

It to Buchnera BUsg564.

This is an uncharacterized protein from Buchnera aphidicola subsp. Acyrthosiphon pisum (strain APS) (Acyrthosiphon pisum symbiotic bacterium).